Reading from the N-terminus, the 77-residue chain is UPF0401 protein ECP_3853 (77 aa).

This sequence belongs to the UPF0401 family.

This chain is UPF0401 protein ECP_3853, found in Escherichia coli O6:K15:H31 (strain 536 / UPEC).